The sequence spans 167 residues: Shikimate kinase (167 aa).

Residue 12–17 (GSGKTT) participates in ATP binding. Residue threonine 16 coordinates Mg(2+). 3 residues coordinate substrate: aspartate 34, arginine 58, and glycine 80. Arginine 117 provides a ligand contact to ATP. Residue arginine 135 coordinates substrate. Arginine 152 is an ATP binding site.

Belongs to the shikimate kinase family. As to quaternary structure, monomer. Requires Mg(2+) as cofactor.

Its subcellular location is the cytoplasm. The catalysed reaction is shikimate + ATP = 3-phosphoshikimate + ADP + H(+). Its pathway is metabolic intermediate biosynthesis; chorismate biosynthesis; chorismate from D-erythrose 4-phosphate and phosphoenolpyruvate: step 5/7. Functionally, catalyzes the specific phosphorylation of the 3-hydroxyl group of shikimic acid using ATP as a cosubstrate. The sequence is that of Shikimate kinase from Salinispora arenicola (strain CNS-205).